Reading from the N-terminus, the 98-residue chain is Small ribosomal subunit protein uS17 (98 aa).

It belongs to the universal ribosomal protein uS17 family. As to quaternary structure, part of the 30S ribosomal subunit.

Its function is as follows. One of the primary rRNA binding proteins, it binds specifically to the 5'-end of 16S ribosomal RNA. The polypeptide is Small ribosomal subunit protein uS17 (Carboxydothermus hydrogenoformans (strain ATCC BAA-161 / DSM 6008 / Z-2901)).